A 478-amino-acid polypeptide reads, in one-letter code: Proline--tRNA ligase (478 aa).

This sequence belongs to the class-II aminoacyl-tRNA synthetase family. ProS type 3 subfamily. Homodimer.

The protein localises to the cytoplasm. The enzyme catalyses tRNA(Pro) + L-proline + ATP = L-prolyl-tRNA(Pro) + AMP + diphosphate. In terms of biological role, catalyzes the attachment of proline to tRNA(Pro) in a two-step reaction: proline is first activated by ATP to form Pro-AMP and then transferred to the acceptor end of tRNA(Pro). The chain is Proline--tRNA ligase from Oceanobacillus iheyensis (strain DSM 14371 / CIP 107618 / JCM 11309 / KCTC 3954 / HTE831).